The following is a 267-amino-acid chain: MQFNRKEYLKDVKNIVVKVGSSTLTYENGLLNLFHIEHLVRQLVDLHNRGYNVILVSSGAIGAGVGKLGLSEKPKSIPEKQAAAAVGQGILLHTYEKIFAEYGKTIGQILLTKEDMIDEVRSCNATNTFNALLDKRVIPIINENDAVVVDEIKVGDNDTLSAFVSKLVKADLLILMSDIEGLYSCDPRINNDAELINFVEKITKDIISCAGGAGTDLGTGGMATKIKAAKIATSAGIPMLIVNGATNEVLQDVVEGKSVGTWFNAIK.

ATP is bound at residue Lys18. Ser58, Asp145, and Asn157 together coordinate substrate. Residues 177 to 178 and 219 to 225 each bind ATP; these read SD and TGGMATK.

The protein belongs to the glutamate 5-kinase family.

The protein localises to the cytoplasm. It carries out the reaction L-glutamate + ATP = L-glutamyl 5-phosphate + ADP. It participates in amino-acid biosynthesis; L-proline biosynthesis; L-glutamate 5-semialdehyde from L-glutamate: step 1/2. In terms of biological role, catalyzes the transfer of a phosphate group to glutamate to form L-glutamate 5-phosphate. The protein is Glutamate 5-kinase of Clostridium tetani (strain Massachusetts / E88).